Reading from the N-terminus, the 201-residue chain is Small ribosomal subunit protein uS4c (201 aa).

The segment at 15 to 44 (LGALPGLTNKRPRAGSDLRNQSRSGKKSQY) is disordered. Residues 89 to 149 (MRLDNILFRL…DEQKSRALIQ (61 aa)) form the S4 RNA-binding domain.

It belongs to the universal ribosomal protein uS4 family. Part of the 30S ribosomal subunit. Contacts protein S5. The interaction surface between S4 and S5 is involved in control of translational fidelity.

The protein localises to the plastid. It localises to the chloroplast. Functionally, one of the primary rRNA binding proteins, it binds directly to 16S rRNA where it nucleates assembly of the body of the 30S subunit. With S5 and S12 plays an important role in translational accuracy. The chain is Small ribosomal subunit protein uS4c (rps4) from Helianthus annuus (Common sunflower).